A 346-amino-acid polypeptide reads, in one-letter code: MKKIEIELNERSYPIHLGTMECLEHAGAVLVVTNPKVGGLYLSYVLERIRAREVFVCTTPDGEAYKTLESVEMILESAFNHRLDRKSLMIALGGGVIGDMVGFASGIFQRGIGFVQIPTTLLSQVDASVGGKTGVNNAFGKNLIGLFHQPKAVYIDPLFLKSLPPREFGAGVAEMVKMAVTFDREFFEELERGDLRDHSFLLKGIERCVKIKARVVAMDEREQGIRAALNYGHTFGHVIEHESGYGHYLHGEAVGMGMVMANTLACGLGLLKESEAERIEKLLARYEIPTRYAIGDVERFYDLFFLDKKSENQKIKFILPEGIGGVAFRDDLSKSMVLSVLEAFCD.

NAD(+)-binding positions include 61–66 (DGEAYK), 95–99 (GVIGD), 119–120 (TT), Lys-132, and Lys-141. 3 residues coordinate Zn(2+): Glu-174, His-233, and His-250.

This sequence belongs to the sugar phosphate cyclases superfamily. Dehydroquinate synthase family. Requires NAD(+) as cofactor. Co(2+) serves as cofactor. The cofactor is Zn(2+).

It localises to the cytoplasm. The enzyme catalyses 7-phospho-2-dehydro-3-deoxy-D-arabino-heptonate = 3-dehydroquinate + phosphate. It participates in metabolic intermediate biosynthesis; chorismate biosynthesis; chorismate from D-erythrose 4-phosphate and phosphoenolpyruvate: step 2/7. In terms of biological role, catalyzes the conversion of 3-deoxy-D-arabino-heptulosonate 7-phosphate (DAHP) to dehydroquinate (DHQ). In Wolinella succinogenes (strain ATCC 29543 / DSM 1740 / CCUG 13145 / JCM 31913 / LMG 7466 / NCTC 11488 / FDC 602W) (Vibrio succinogenes), this protein is 3-dehydroquinate synthase.